Here is a 202-residue protein sequence, read N- to C-terminus: V-type proton ATPase subunit E (202 aa).

The protein belongs to the V-ATPase E subunit family.

Its function is as follows. Produces ATP from ADP in the presence of a proton gradient across the membrane. The polypeptide is V-type proton ATPase subunit E (Halothermothrix orenii (strain H 168 / OCM 544 / DSM 9562)).